We begin with the raw amino-acid sequence, 314 residues long: Vomeronasal type-1 receptor 98 (314 aa).

Residues Met1–Cys19 are Extracellular-facing. A helical transmembrane segment spans residues Glu20–Ile40. The Cytoplasmic portion of the chain corresponds to Arg41–Asp49. The helical transmembrane segment at Leu50 to Ala70 threads the bilayer. The Extracellular segment spans residues Lys71 to Arg92. A disulfide bridge links Cys84 with Cys171. Residues Phe93–Leu113 form a helical membrane-spanning segment. At Cys114–Cys133 the chain is on the cytoplasmic side. A helical transmembrane segment spans residues Phe134–Ile154. Over Ala155–Thr186 the chain is Extracellular. Asn158 carries N-linked (GlcNAc...) asparagine glycosylation. Residues Leu187–Ala207 traverse the membrane as a helical segment. The Cytoplasmic portion of the chain corresponds to Thr208–Ala235. A helical membrane pass occupies residues Ile236–Ile256. Over Ser257 to Ser268 the chain is Extracellular. A helical transmembrane segment spans residues Leu269–Leu289. Over Ser290 to Trp314 the chain is Cytoplasmic.

The protein belongs to the G-protein coupled receptor 1 family.

The protein resides in the cell membrane. Putative pheromone receptor implicated in the regulation of social as well as reproductive behavior. The protein is Vomeronasal type-1 receptor 98 (Vom1r98) of Rattus norvegicus (Rat).